A 487-amino-acid chain; its full sequence is Glutamyl-tRNA(Gln) amidotransferase subunit A (487 aa).

Active-site charge relay system residues include Lys74 and Ser149. Residue Ser173 is the Acyl-ester intermediate of the active site.

This sequence belongs to the amidase family. GatA subfamily. As to quaternary structure, heterotrimer of A, B and C subunits.

It carries out the reaction L-glutamyl-tRNA(Gln) + L-glutamine + ATP + H2O = L-glutaminyl-tRNA(Gln) + L-glutamate + ADP + phosphate + H(+). In terms of biological role, allows the formation of correctly charged Gln-tRNA(Gln) through the transamidation of misacylated Glu-tRNA(Gln) in organisms which lack glutaminyl-tRNA synthetase. The reaction takes place in the presence of glutamine and ATP through an activated gamma-phospho-Glu-tRNA(Gln). The sequence is that of Glutamyl-tRNA(Gln) amidotransferase subunit A from Synechococcus sp. (strain CC9311).